The sequence spans 454 residues: Ribosomal protein uS12 methylthiotransferase RimO (454 aa).

The 112-residue stretch at 14–125 (SKIAFSHVGC…IAKVLDRVEK (112 aa)) folds into the MTTase N-terminal domain. [4Fe-4S] cluster contacts are provided by cysteine 23, cysteine 59, cysteine 88, cysteine 163, cysteine 167, and cysteine 170. Residues 149–378 (DKNKFVAYLR…ISVQQNISRE (230 aa)) form the Radical SAM core domain. A TRAM domain is found at 381 to 452 (QIYVGSKMKI…EYDLYGETIK (72 aa)).

The protein belongs to the methylthiotransferase family. RimO subfamily. The cofactor is [4Fe-4S] cluster.

It localises to the cytoplasm. It catalyses the reaction L-aspartate(89)-[ribosomal protein uS12]-hydrogen + (sulfur carrier)-SH + AH2 + 2 S-adenosyl-L-methionine = 3-methylsulfanyl-L-aspartate(89)-[ribosomal protein uS12]-hydrogen + (sulfur carrier)-H + 5'-deoxyadenosine + L-methionine + A + S-adenosyl-L-homocysteine + 2 H(+). Functionally, catalyzes the methylthiolation of an aspartic acid residue of ribosomal protein uS12. The sequence is that of Ribosomal protein uS12 methylthiotransferase RimO from Prochlorococcus marinus (strain MIT 9301).